The following is a 196-amino-acid chain: Mpv17-like protein (196 aa).

At 1–16 (MVSWWQALTRAAGRYP) the chain is on the cytoplasmic side. The interval 16 to 55 (PWPANVLLYAGFFSGGDALQQVLRGGPADWQHTRHVATVA) is targeting to peroxisomes. The helical transmembrane segment at 17-34 (WPANVLLYAGFFSGGDAL) threads the bilayer. Residues 35–50 (QQVLRGGPADWQHTRH) lie on the Lumenal side of the membrane. A helical transmembrane segment spans residues 51–67 (VATVAVAFHANLNYVWL). At 68–90 (NLLERALPGRAPRTILAKVLCDQ) the chain is on the cytoplasmic side. A helical transmembrane segment spans residues 91–108 (ALGGPVYVSTFYAGMSIL). The Lumenal portion of the chain corresponds to 109-150 (QGKDDIFLDMRQKFWNTYKSGLMYWPFVQLINFSLIPIRWRT). The chain crosses the membrane as a helical span at residues 151 to 167 (AYTGLCGFLWATFLCFS). Residues 168-196 (QQEGDGTFKSAFTFRRIKVTNEVEKPSEK) are Cytoplasmic-facing.

The protein belongs to the peroxisomal membrane protein PXMP2/4 family.

Its subcellular location is the peroxisome membrane. Participates in reactive oxygen species metabolism by up- or down-regulation of the genes of antioxidant enzymes. Protective against the mitochondrial apoptotic cascade. In Bos taurus (Bovine), this protein is Mpv17-like protein (MPV17L).